Here is a 304-residue protein sequence, read N- to C-terminus: ATP phosphoribosyltransferase (304 aa).

The protein belongs to the ATP phosphoribosyltransferase family. Long subfamily. The cofactor is Mg(2+).

Its subcellular location is the cytoplasm. It catalyses the reaction 1-(5-phospho-beta-D-ribosyl)-ATP + diphosphate = 5-phospho-alpha-D-ribose 1-diphosphate + ATP. It participates in amino-acid biosynthesis; L-histidine biosynthesis; L-histidine from 5-phospho-alpha-D-ribose 1-diphosphate: step 1/9. With respect to regulation, feedback inhibited by histidine. Catalyzes the condensation of ATP and 5-phosphoribose 1-diphosphate to form N'-(5'-phosphoribosyl)-ATP (PR-ATP). Has a crucial role in the pathway because the rate of histidine biosynthesis seems to be controlled primarily by regulation of HisG enzymatic activity. The sequence is that of ATP phosphoribosyltransferase from Xanthomonas campestris pv. campestris (strain B100).